We begin with the raw amino-acid sequence, 70 residues long: MKKDIHPKYVEITATCSCGNVIKTRSTVGHDLNLDVCGNCHPFFTGKQRVVDTGGRVERFNKRFSIPGSK.

The Zn(2+) site is built by cysteine 16, cysteine 18, cysteine 37, and cysteine 40.

The protein belongs to the bacterial ribosomal protein bL31 family. Type A subfamily. As to quaternary structure, part of the 50S ribosomal subunit. Requires Zn(2+) as cofactor.

Its function is as follows. Binds the 23S rRNA. This chain is Large ribosomal subunit protein bL31, found in Cronobacter sakazakii (strain ATCC BAA-894) (Enterobacter sakazakii).